Reading from the N-terminus, the 214-residue chain is Riboflavin kinase (214 aa).

Residues 1–26 (MRPDGPRDPVVGPDSGPEPPYPVRLS) form a disordered region. Thr-44 and Asn-46 together coordinate Mg(2+). Glu-112 functions as the Nucleophile in the catalytic mechanism.

This sequence belongs to the flavokinase family. Requires Zn(2+) as cofactor. Mg(2+) is required as a cofactor.

It catalyses the reaction riboflavin + ATP = FMN + ADP + H(+). Its pathway is cofactor biosynthesis; FMN biosynthesis; FMN from riboflavin (ATP route): step 1/1. Its function is as follows. Catalyzes the phosphorylation of riboflavin (vitamin B2) to form flavin mononucleotide (FMN) coenzyme. This is Riboflavin kinase (fmn1) from Aspergillus clavatus (strain ATCC 1007 / CBS 513.65 / DSM 816 / NCTC 3887 / NRRL 1 / QM 1276 / 107).